The chain runs to 395 residues: MKLLGKYVDKGMQGNVTLVPEESEDMWHAYNLIAKGDSVRSTTIRKVQNETATGSSTSSRVRTTLTIAVESIDFDTQACVLRLKGRNIEENQYVKMGAYHTLDLELNRKFELRKPEWDTIALERIEMACDPTQSADVAAVVMQEGLAHVCLITASMTLVRSKIEVSIPRKRKGSVQQHEKGLAKFYEQVMQSILRHVNFDVVKCVLIASPGFVRDQFYDYMFQQAVKMDYKLLLDNKSKFMLVHASSGFKHSLREILQDPAVLAKMSDTKAAGEVKALEQFYMMLQCEPAKAFYGKKHVLQAAESQAIETLLISDNLFRCQDVSLRKEYVNLVESIRDAGGEVKIFSSMHISGEQLAQLTGIAALLRFPMPELEDSDDDDDEDGAAGGVADSDSD.

The short motif at 210 to 212 is the PGF motif element; that stretch reads PGF. The disordered stretch occupies residues 371–395; that stretch reads PELEDSDDDDDEDGAAGGVADSDSD. Residues 372–384 show a composition bias toward acidic residues; the sequence is ELEDSDDDDDEDG.

It belongs to the eukaryotic release factor 1 family. Pelota subfamily. In terms of assembly, component of the Pelota-HBS1L complex, also named Dom34-Hbs1 complex, composed of pelo and HBS1. Interacts with Pink1 and Cnot4; the interaction with Cnot4 appears to be Pink1-dependent. A divalent metal cation is required as a cofactor. As to expression, expressed in ovaries and muscles (at protein level). Expressed throughout all development stages.

The protein localises to the nucleus. Its subcellular location is the cytoplasm. Component of the Pelota-HBS1L complex, a complex that recognizes stalled ribosomes and triggers the No-Go Decay (NGD) pathway. In the Pelota-HBS1L complex, pelo recognizes ribosomes stalled at the 3' end of an mRNA and engages stalled ribosomes by destabilizing mRNA in the mRNA channel. Following ribosome-binding, the Pelota-HBS1L complex promotes recruitment of pix, which drives the disassembly of stalled ribosomes, followed by degradation of damaged mRNAs as part of the NGD pathway. Required prior to the first meiotic division for spindle formation and nuclear envelope breakdown during spermatogenesis. Together with HBS1, promotes spermatid individualization during spermatogenesis. Required for ovarian germ line stem cell self-renewal and oocyte development during oogenesis. Together with HSB1, required for transposon silencing in the ovary and testis. As part of the Pink1-regulated signaling, is recruited to damaged mitochondrial and is required for recruitment of autophagy receptors and induction of mitophagy. Required for normal eye patterning and for mitotic divisions in the ovary. In Drosophila melanogaster (Fruit fly), this protein is Protein pelota (pelo).